A 261-amino-acid polypeptide reads, in one-letter code: Gap junction beta-6 protein (261 aa).

The Cytoplasmic segment spans residues 1 to 22 (MDWGTLHTVIGGVNKHSTSIGK). The helical transmembrane segment at 23-45 (VWITVIFIFRVMILVVAAQEVWG) threads the bilayer. Over 46 to 75 (DEQEDFVCNTLQPGCKNVCYDHFFPVSHIR) the chain is Extracellular. Residues 76-98 (LWALQLIFVSTPALLVAMHVAYY) form a helical membrane-spanning segment. Topologically, residues 99–131 (RHETARKFIRGEKRNEFKDLEDIKRQKVRIEGS) are cytoplasmic. The helical transmembrane segment at 132 to 154 (LWWTYTSSIFFRIIFEAAFMYVF) threads the bilayer. At 155-192 (YFLYNGYHLPWVLKCGIDPCPNLVDCFISRPTEKTVFT) the chain is on the extracellular side. Residues 193-215 (VFMISASVICMLLNVAELCYLLL) traverse the membrane as a helical segment. The Cytoplasmic portion of the chain corresponds to 216–261 (KLCFRRSKRTQAQRNHPNHALKESKQNEMNELISDSGQNAITSFPS).

This sequence belongs to the connexin family. Beta-type (group I) subfamily. A connexon is composed of a hexamer of connexins. Interacts with CNST. In terms of tissue distribution, highly expressed in adult brain and skin. Less in uterus, lung and eye. Very low in testis and sciatic nerve. No expression before birth.

Its subcellular location is the cell membrane. It is found in the cell junction. The protein resides in the gap junction. One gap junction consists of a cluster of closely packed pairs of transmembrane channels, the connexons, through which materials of low MW diffuse from one cell to a neighboring cell. The protein is Gap junction beta-6 protein (Gjb6) of Mus musculus (Mouse).